We begin with the raw amino-acid sequence, 283 residues long: Diaminopimelate epimerase (283 aa).

Residues Asn-13, Gln-45, and Asn-65 each coordinate substrate. The active-site Proton donor is Cys-74. Residues 75–76, Asn-156, Asn-190, and 208–209 contribute to the substrate site; these read GN and ER. The active-site Proton acceptor is Cys-217. A substrate-binding site is contributed by 218–219; the sequence is GS.

The protein belongs to the diaminopimelate epimerase family. Homodimer.

The protein resides in the cytoplasm. The catalysed reaction is (2S,6S)-2,6-diaminopimelate = meso-2,6-diaminopimelate. Its pathway is amino-acid biosynthesis; L-lysine biosynthesis via DAP pathway; DL-2,6-diaminopimelate from LL-2,6-diaminopimelate: step 1/1. Its function is as follows. Catalyzes the stereoinversion of LL-2,6-diaminopimelate (L,L-DAP) to meso-diaminopimelate (meso-DAP), a precursor of L-lysine and an essential component of the bacterial peptidoglycan. The sequence is that of Diaminopimelate epimerase from Bartonella tribocorum (strain CIP 105476 / IBS 506).